The chain runs to 277 residues: Thymidylate synthase (277 aa).

Arg21 provides a ligand contact to dUMP. (6R)-5,10-methylene-5,6,7,8-tetrahydrofolate is bound at residue His51. Arg139 to Arg140 is a binding site for dUMP. The Nucleophile role is filled by Cys159. Residues Arg179–Asp182, Asn190, and His220–Tyr222 contribute to the dUMP site. Residue Asp182 coordinates (6R)-5,10-methylene-5,6,7,8-tetrahydrofolate. Position 276 (Ala276) interacts with (6R)-5,10-methylene-5,6,7,8-tetrahydrofolate.

This sequence belongs to the thymidylate synthase family. Bacterial-type ThyA subfamily. As to quaternary structure, homodimer.

The protein localises to the cytoplasm. It carries out the reaction dUMP + (6R)-5,10-methylene-5,6,7,8-tetrahydrofolate = 7,8-dihydrofolate + dTMP. The protein operates within pyrimidine metabolism; dTTP biosynthesis. Its function is as follows. Catalyzes the reductive methylation of 2'-deoxyuridine-5'-monophosphate (dUMP) to 2'-deoxythymidine-5'-monophosphate (dTMP) while utilizing 5,10-methylenetetrahydrofolate (mTHF) as the methyl donor and reductant in the reaction, yielding dihydrofolate (DHF) as a by-product. This enzymatic reaction provides an intracellular de novo source of dTMP, an essential precursor for DNA biosynthesis. This is Thymidylate synthase from Ruegeria sp. (strain TM1040) (Silicibacter sp.).